The primary structure comprises 127 residues: Large ribosomal subunit protein bL12 (127 aa).

Belongs to the bacterial ribosomal protein bL12 family. In terms of assembly, homodimer. Part of the ribosomal stalk of the 50S ribosomal subunit. Forms a multimeric L10(L12)X complex, where L10 forms an elongated spine to which 2 to 4 L12 dimers bind in a sequential fashion. Binds GTP-bound translation factors.

Forms part of the ribosomal stalk which helps the ribosome interact with GTP-bound translation factors. Is thus essential for accurate translation. In Streptococcus thermophilus (strain CNRZ 1066), this protein is Large ribosomal subunit protein bL12.